Consider the following 321-residue polypeptide: Phospho-N-acetylmuramoyl-pentapeptide-transferase (321 aa).

Transmembrane regions (helical) follow at residues 6 to 26 (IFIP…LFIG), 54 to 74 (MGGV…GLFF), 77 to 97 (FTPS…LGYL), 117 to 137 (LIGQ…EGFS), 143 to 163 (FGVA…FWLV), 175 to 195 (IDGL…IIAW), 200 to 220 (FDVV…FPYN), 226 to 246 (IFMG…ISII), 251 to 271 (WTLL…ILQV), and 301 to 321 (IDFV…WILF).

Belongs to the glycosyltransferase 4 family. MraY subfamily. Mg(2+) is required as a cofactor.

The protein localises to the cell membrane. It catalyses the reaction UDP-N-acetyl-alpha-D-muramoyl-L-alanyl-gamma-D-glutamyl-L-lysyl-D-alanyl-D-alanine + di-trans,octa-cis-undecaprenyl phosphate = Mur2Ac(oyl-L-Ala-gamma-D-Glu-L-Lys-D-Ala-D-Ala)-di-trans,octa-cis-undecaprenyl diphosphate + UMP. It functions in the pathway cell wall biogenesis; peptidoglycan biosynthesis. In terms of biological role, catalyzes the initial step of the lipid cycle reactions in the biosynthesis of the cell wall peptidoglycan: transfers peptidoglycan precursor phospho-MurNAc-pentapeptide from UDP-MurNAc-pentapeptide onto the lipid carrier undecaprenyl phosphate, yielding undecaprenyl-pyrophosphoryl-MurNAc-pentapeptide, known as lipid I. The sequence is that of Phospho-N-acetylmuramoyl-pentapeptide-transferase from Enterococcus faecalis (strain ATCC 700802 / V583).